Consider the following 76-residue polypeptide: DNA-directed RNA polymerase subunit epsilon (76 aa).

The protein belongs to the RNA polymerase subunit epsilon family. As to quaternary structure, RNAP is composed of a core of 2 alpha, a beta and a beta' subunit. The core is associated with a delta subunit, and at least one of epsilon or omega. When a sigma factor is associated with the core the holoenzyme is formed, which can initiate transcription.

The catalysed reaction is RNA(n) + a ribonucleoside 5'-triphosphate = RNA(n+1) + diphosphate. A non-essential component of RNA polymerase (RNAP). In Streptococcus pyogenes serotype M1, this protein is DNA-directed RNA polymerase subunit epsilon.